The chain runs to 194 residues: Imidazoleglycerol-phosphate dehydratase (194 aa).

Belongs to the imidazoleglycerol-phosphate dehydratase family.

The protein resides in the cytoplasm. The enzyme catalyses D-erythro-1-(imidazol-4-yl)glycerol 3-phosphate = 3-(imidazol-4-yl)-2-oxopropyl phosphate + H2O. The protein operates within amino-acid biosynthesis; L-histidine biosynthesis; L-histidine from 5-phospho-alpha-D-ribose 1-diphosphate: step 6/9. The protein is Imidazoleglycerol-phosphate dehydratase of Bacillus velezensis (strain DSM 23117 / BGSC 10A6 / LMG 26770 / FZB42) (Bacillus amyloliquefaciens subsp. plantarum).